A 214-amino-acid chain; its full sequence is Clavatol biosynthesis cluster protein B (214 aa).

The N-terminal stretch at 1-17 (MAALSFQCLCVASAVRA) is a signal peptide. Residues N103 and N204 are each glycosylated (N-linked (GlcNAc...) asparagine).

It functions in the pathway secondary metabolite biosynthesis. In terms of biological role, part of the cla gene cluster that produces clavatol and ortho-quinone methide. The clavatol biosynthesis cluster cla and the terrestric acid cluster tra are both involved in the production of peniphenones and penilactones. The non-reducing PKS claF is responsible for the formation of clavatol from successive condensations of 3 malonyl-CoA units, presumably with a simple acetyl-CoA starter unit, and 2 methylation steps. The esterase claE probably collaborates with claF by catalyzing the hydrolysis of ACP-bound acyl intermediates to free the ACP from stalled intermediates. The clavatol oxidase claD then converts clavatol to hydroxyclavatol. Spontaneous dehydration of hydroxyclavatol leads to the accumulation of the highly active ortho-quinone methide. On the other hand, the PKS-NRPS hybrid traA is involved in the formation of crustosic acid, with the help of traB and traD. The polyketide synthase module (PKS) of traA is responsible for the synthesis of the polyketide backbone via the condensation of an acetyl-CoA starter unit with 3 malonyl-CoA units. The downstream nonribosomal peptide synthetase (NRPS) module then amidates the carboxyl end of the polyketide with L-malic acid. Because traA lacks a designated enoylreductase (ER) domain, the required activity is provided the enoyl reductase traG. Crustosic acid undergoes decarboxylation and isomerization to the terrestric acid, catalyzed by the 2-oxoglutarate-dependent dioxygenase traH. Both acids are further converted to the 2 gamma-butyrolactones (R)-5-methyltetronic acid and (S)-5-carboxylmethyltetronic acid, with involvement of the cytochrome P450 monooxygenase claJ. Spontaneous addition of the methide to these gamma-butyrolactones leads to peniphenone D and penilactone D, which undergo again stereospecific attacking by methide to give penilactones A and B. The function of claB has not been investigated yet. The sequence is that of Clavatol biosynthesis cluster protein B from Penicillium crustosum (Blue mold fungus).